The chain runs to 204 residues: Nucleoside triphosphate pyrophosphatase (204 aa).

The active-site Proton acceptor is Asp78.

This sequence belongs to the Maf family. The cofactor is a divalent metal cation.

It localises to the cytoplasm. The catalysed reaction is a ribonucleoside 5'-triphosphate + H2O = a ribonucleoside 5'-phosphate + diphosphate + H(+). The enzyme catalyses a 2'-deoxyribonucleoside 5'-triphosphate + H2O = a 2'-deoxyribonucleoside 5'-phosphate + diphosphate + H(+). In terms of biological role, nucleoside triphosphate pyrophosphatase. May have a dual role in cell division arrest and in preventing the incorporation of modified nucleotides into cellular nucleic acids. The polypeptide is Nucleoside triphosphate pyrophosphatase (Prochlorococcus marinus (strain MIT 9215)).